The primary structure comprises 514 residues: ATP synthase subunit alpha (514 aa).

170–177 lines the ATP pocket; it reads GDRQTGKT.

Belongs to the ATPase alpha/beta chains family. As to quaternary structure, F-type ATPases have 2 components, CF(1) - the catalytic core - and CF(0) - the membrane proton channel. CF(1) has five subunits: alpha(3), beta(3), gamma(1), delta(1), epsilon(1). CF(0) has three main subunits: a(1), b(2) and c(9-12). The alpha and beta chains form an alternating ring which encloses part of the gamma chain. CF(1) is attached to CF(0) by a central stalk formed by the gamma and epsilon chains, while a peripheral stalk is formed by the delta and b chains.

The protein localises to the cell inner membrane. It catalyses the reaction ATP + H2O + 4 H(+)(in) = ADP + phosphate + 5 H(+)(out). Functionally, produces ATP from ADP in the presence of a proton gradient across the membrane. The alpha chain is a regulatory subunit. This chain is ATP synthase subunit alpha, found in Psychrobacter sp. (strain PRwf-1).